Here is a 691-residue protein sequence, read N- to C-terminus: Elongation factor G (691 aa).

Residues 8-282 (ERVRNIGIAA…AVVDYLPAPI (275 aa)) form the tr-type G domain. GTP contacts are provided by residues 17–24 (AHIDAGKT), 81–85 (DTPGH), and 135–138 (NKMD).

The protein belongs to the TRAFAC class translation factor GTPase superfamily. Classic translation factor GTPase family. EF-G/EF-2 subfamily.

It is found in the cytoplasm. Functionally, catalyzes the GTP-dependent ribosomal translocation step during translation elongation. During this step, the ribosome changes from the pre-translocational (PRE) to the post-translocational (POST) state as the newly formed A-site-bound peptidyl-tRNA and P-site-bound deacylated tRNA move to the P and E sites, respectively. Catalyzes the coordinated movement of the two tRNA molecules, the mRNA and conformational changes in the ribosome. This chain is Elongation factor G, found in Synechococcus sp. (strain WH7803).